The sequence spans 834 residues: Protein kintoun (834 aa).

Disordered regions lie at residues 214–239 (TAEE…KQEP), 374–415 (SRED…SVAP), 547–669 (KGKV…STGR), and 759–834 (KKNQ…EMDD). The residue at position 378 (Ser-378) is a Phosphoserine. Acidic residues predominate over residues 389 to 398 (PVEEDPDGEL). Residues 552–571 (AKKDNAPLDVKFERNQEGHA) show a composition bias toward basic and acidic residues. A compositionally biased stretch (acidic residues) spans 582–596 (EEEEDKENQDQEPES). Residues 597–607 (DQQQQQQVQNK) show a composition bias toward low complexity. 2 stretches are compositionally biased toward basic residues: residues 608 to 619 (KPGKKQRKKNKK) and 759 to 773 (KKNQ…RAQQ). Ser-777 carries the phosphoserine modification. Residues 785–798 (EETRGSALKQEENP) are compositionally biased toward basic and acidic residues.

It belongs to the PIH1 family. Kintoun subfamily. As to quaternary structure, interacts with Pp1alpha-96A, Pp1-87B, Pp1-13C and flw.

The protein localises to the cytoplasm. Required for cytoplasmic pre-assembly of axonemal dyneins, thereby playing a central role in motility in cilia and flagella. Involved in pre-assembly of dynein arm complexes in the cytoplasm before intraflagellar transport loads them for the ciliary compartment. The chain is Protein kintoun from Drosophila melanogaster (Fruit fly).